The chain runs to 867 residues: Nitrate reductase [NADPH] (867 aa).

Positions 38-58 are disordered; it reads DIPLPPPSKEPTEVLSIDKPT. Residue C152 participates in Mo-molybdopterin binding. The Cytochrome b5 heme-binding domain occupies 514 to 589; sequence NRIIDLQEFK…MPDYHIGTMD (76 aa). H549 and H572 together coordinate heme. The region spanning 615–726 is the FAD-binding FR-type domain; it reads KSWTKATLVK…KGPTGRFEYL (112 aa). Residues 669–672, 686–690, F691, 700–702, and T753 each bind FAD; these read RSYT, LVKIY, and KMT. An NADP(+)-binding site is contributed by 837-846; sequence MVLICGPEAM.

Belongs to the nitrate reductase family. Homodimer. Requires FAD as cofactor. Heme is required as a cofactor. The cofactor is Mo-molybdopterin.

The enzyme catalyses nitrite + NADP(+) + H2O = nitrate + NADPH + H(+). Its function is as follows. Nitrate reductase is a key enzyme involved in the first step of nitrate assimilation in plants, fungi and bacteria. The chain is Nitrate reductase [NADPH] (niaD) from Aspergillus niger.